A 476-amino-acid chain; its full sequence is Siroheme synthase (476 aa).

A precorrin-2 dehydrogenase /sirohydrochlorin ferrochelatase region spans residues 1–207 (MTANALFPLF…QRHAEAEAVL (207 aa)). Residues 25–26 (KV) and 46–47 (PS) contribute to the NAD(+) site. Serine 132 is modified (phosphoserine). The interval 220–476 (GSVTLVGAGA…SAPCPPARIL (257 aa)) is uroporphyrinogen-III C-methyltransferase. Catalysis depends on aspartate 252, which acts as the Proton acceptor. Catalysis depends on lysine 274, which acts as the Proton donor. S-adenosyl-L-methionine contacts are provided by residues 305–307 (GGD), valine 310, 335–336 (TA), methionine 387, and glycine 416.

The protein in the N-terminal section; belongs to the precorrin-2 dehydrogenase / sirohydrochlorin ferrochelatase family. This sequence in the C-terminal section; belongs to the precorrin methyltransferase family.

It carries out the reaction uroporphyrinogen III + 2 S-adenosyl-L-methionine = precorrin-2 + 2 S-adenosyl-L-homocysteine + H(+). The catalysed reaction is precorrin-2 + NAD(+) = sirohydrochlorin + NADH + 2 H(+). It catalyses the reaction siroheme + 2 H(+) = sirohydrochlorin + Fe(2+). It participates in cofactor biosynthesis; adenosylcobalamin biosynthesis; precorrin-2 from uroporphyrinogen III: step 1/1. The protein operates within cofactor biosynthesis; adenosylcobalamin biosynthesis; sirohydrochlorin from precorrin-2: step 1/1. Its pathway is porphyrin-containing compound metabolism; siroheme biosynthesis; precorrin-2 from uroporphyrinogen III: step 1/1. It functions in the pathway porphyrin-containing compound metabolism; siroheme biosynthesis; siroheme from sirohydrochlorin: step 1/1. It participates in porphyrin-containing compound metabolism; siroheme biosynthesis; sirohydrochlorin from precorrin-2: step 1/1. Functionally, multifunctional enzyme that catalyzes the SAM-dependent methylations of uroporphyrinogen III at position C-2 and C-7 to form precorrin-2 via precorrin-1. Then it catalyzes the NAD-dependent ring dehydrogenation of precorrin-2 to yield sirohydrochlorin. Finally, it catalyzes the ferrochelation of sirohydrochlorin to yield siroheme. The protein is Siroheme synthase of Xylella fastidiosa (strain M12).